A 219-amino-acid chain; its full sequence is Endonuclease III (219 aa).

One can recognise a HhH domain in the interval 109-128 (RDELVKLPGVGRKTANVVVS). [4Fe-4S] cluster-binding residues include C189, C196, C199, and C205.

The protein belongs to the Nth/MutY family. Requires [4Fe-4S] cluster as cofactor.

The catalysed reaction is 2'-deoxyribonucleotide-(2'-deoxyribose 5'-phosphate)-2'-deoxyribonucleotide-DNA = a 3'-end 2'-deoxyribonucleotide-(2,3-dehydro-2,3-deoxyribose 5'-phosphate)-DNA + a 5'-end 5'-phospho-2'-deoxyribonucleoside-DNA + H(+). Functionally, DNA repair enzyme that has both DNA N-glycosylase activity and AP-lyase activity. The DNA N-glycosylase activity releases various damaged pyrimidines from DNA by cleaving the N-glycosidic bond, leaving an AP (apurinic/apyrimidinic) site. The AP-lyase activity cleaves the phosphodiester bond 3' to the AP site by a beta-elimination, leaving a 3'-terminal unsaturated sugar and a product with a terminal 5'-phosphate. The chain is Endonuclease III from Bacillus subtilis (strain 168).